We begin with the raw amino-acid sequence, 538 residues long: Dihomomethionine N-hydroxylase (538 aa).

The chain crosses the membrane as a helical span at residues 8–28; the sequence is LPYPFHILLVFILSMASITLL.

It belongs to the cytochrome P450 family. The cofactor is heme. In terms of tissue distribution, highly expressed in cotyledons, leaves, stems and siliques. Detected in flowers and lateral roots, but not in the main root. Expressed only in the vascular bundles in apical plant parts.

It localises to the endoplasmic reticulum membrane. It carries out the reaction an L-polyhomomethionine + 2 reduced [NADPH--hemoprotein reductase] + 2 O2 = an (E)-omega-(methylsulfanyl)-alkanal oxime + 2 oxidized [NADPH--hemoprotein reductase] + CO2 + 3 H2O + 2 H(+). It catalyses the reaction L-dihomomethionine + 2 reduced [NADPH--hemoprotein reductase] + 2 O2 = (E)-5-(methylsulfanyl)pentanal oxime + 2 oxidized [NADPH--hemoprotein reductase] + CO2 + 3 H2O + 2 H(+). The catalysed reaction is L-trihomomethionine + 2 reduced [NADPH--hemoprotein reductase] + 2 O2 = (E)-6-(methylsulfanyl)hexanal oxime + 2 oxidized [NADPH--hemoprotein reductase] + CO2 + 3 H2O + 2 H(+). Functionally, catalyzes the conversion of the short chain elongated methionines di-, tri-, and tetrahomomethionine to their respective aldoximes 5-methylthiopentanaldoxime, 6-methylthiohexanaldoxime, and 7-methylheptanaldoxime. In Arabidopsis thaliana (Mouse-ear cress), this protein is Dihomomethionine N-hydroxylase (CYP79F1).